A 369-amino-acid polypeptide reads, in one-letter code: Dihydroorotate dehydrogenase (quinone) (369 aa).

Residues 66-70 (AGFDK) and Thr90 contribute to the FMN site. Lys70 lines the substrate pocket. 115-119 (NRMGF) contributes to the substrate binding site. Residues Asn143 and Asn176 each contribute to the FMN site. Residue Asn176 participates in substrate binding. Ser179 functions as the Nucleophile in the catalytic mechanism. Asn181 is a substrate binding site. The FMN site is built by Lys217 and Thr245. 246–247 (NT) is a substrate binding site. FMN contacts are provided by residues Gly271, Gly300, and 321-322 (YT).

Belongs to the dihydroorotate dehydrogenase family. Type 2 subfamily. As to quaternary structure, monomer. FMN serves as cofactor.

Its subcellular location is the cell membrane. It carries out the reaction (S)-dihydroorotate + a quinone = orotate + a quinol. It functions in the pathway pyrimidine metabolism; UMP biosynthesis via de novo pathway; orotate from (S)-dihydroorotate (quinone route): step 1/1. Its function is as follows. Catalyzes the conversion of dihydroorotate to orotate with quinone as electron acceptor. This is Dihydroorotate dehydrogenase (quinone) from Nocardia farcinica (strain IFM 10152).